The primary structure comprises 103 residues: Pyrimidine/purine nucleoside phosphorylase (103 aa).

Belongs to the nucleoside phosphorylase PpnP family.

The catalysed reaction is a purine D-ribonucleoside + phosphate = a purine nucleobase + alpha-D-ribose 1-phosphate. It catalyses the reaction adenosine + phosphate = alpha-D-ribose 1-phosphate + adenine. It carries out the reaction cytidine + phosphate = cytosine + alpha-D-ribose 1-phosphate. The enzyme catalyses guanosine + phosphate = alpha-D-ribose 1-phosphate + guanine. The catalysed reaction is inosine + phosphate = alpha-D-ribose 1-phosphate + hypoxanthine. It catalyses the reaction thymidine + phosphate = 2-deoxy-alpha-D-ribose 1-phosphate + thymine. It carries out the reaction uridine + phosphate = alpha-D-ribose 1-phosphate + uracil. The enzyme catalyses xanthosine + phosphate = alpha-D-ribose 1-phosphate + xanthine. Its function is as follows. Catalyzes the phosphorolysis of diverse nucleosides, yielding D-ribose 1-phosphate and the respective free bases. Can use uridine, adenosine, guanosine, cytidine, thymidine, inosine and xanthosine as substrates. Also catalyzes the reverse reactions. The sequence is that of Pyrimidine/purine nucleoside phosphorylase from Sulfurovum sp. (strain NBC37-1).